The primary structure comprises 396 residues: L-lactate dehydrogenase (396 aa).

The FMN hydroxy acid dehydrogenase domain occupies 1-380 (MIISAASDYR…SGDSLVQELG (380 aa)). Tyr-24 provides a ligand contact to substrate. 2 residues coordinate FMN: Ser-106 and Gln-127. Residue Tyr-129 coordinates substrate. Thr-155 is a binding site for FMN. Arg-164 contacts substrate. Lys-251 contributes to the FMN binding site. The active-site Proton acceptor is His-275. A substrate-binding site is contributed by Arg-278. An FMN-binding site is contributed by 306–330 (DSGIRNGLDVVRMIALGADTVLLGR).

Belongs to the FMN-dependent alpha-hydroxy acid dehydrogenase family. FMN serves as cofactor.

Its subcellular location is the cell inner membrane. The catalysed reaction is (S)-lactate + A = pyruvate + AH2. Catalyzes the conversion of L-lactate to pyruvate. Is coupled to the respiratory chain. The chain is L-lactate dehydrogenase from Salmonella enteritidis PT4 (strain P125109).